We begin with the raw amino-acid sequence, 344 residues long: Aurora kinase B (344 aa).

Thr-35 bears the Phosphothreonine mark. Phosphoserine is present on Ser-62. Phosphothreonine is present on Thr-64. The region spanning 77–327 (FEIGRPLGKG…LAQVSAHPWV (251 aa)) is the Protein kinase domain. Residues 83-91 (LGKGKFGNV) and Lys-106 each bind ATP. Asp-200 serves as the catalytic Proton acceptor. Lys-215 carries the post-translational modification N6-acetyllysine. Ser-227 carries the phosphoserine modification. Position 232 is a phosphothreonine; by autocatalysis (Thr-232).

This sequence belongs to the protein kinase superfamily. Ser/Thr protein kinase family. Aurora subfamily. Component of the chromosomal passenger complex (CPC) composed of at least BIRC5/survivin, CDCA8/borealin, INCENP, AURKB or AURKC; predominantly independent AURKB- and AURKC-containing complexes exist. Associates with RACGAP1 during M phase. Interacts with SPDYC; this interaction may be required for proper localization of active, Thr-232-phosphorylated AURKB form during prometaphase and metaphase. Interacts with p53/TP53. Interacts (via the middle kinase domain) with NOC2L (via the N- and C-terminus domains). Interacts with CDCA1. Interacts with EVI5. Interacts with JTB. Interacts with NDC80. Interacts with PSMA3. Interacts with RNF2/RING1B. Interacts with SEPTIN1. Interacts with SIRT2. Interacts with TACC1. Interacts with TTC28. In terms of processing, the phosphorylation of Thr-232 requires the binding to INCENP and occurs by means of an autophosphorylation mechanism. Thr-232 phosphorylation is indispensable for the AURKB kinase activity. Post-translationally, acetylated at Lys-215 by KAT5 at kinetochores, increasing AURKB activity and promoting accurate chromosome segregation in mitosis. Ubiquitinated by different BCR (BTB-CUL3-RBX1) E3 ubiquitin ligase complexes. Ubiquitinated by the BCR(KLHL9-KLHL13) E3 ubiquitin ligase complex, ubiquitination leads to removal from mitotic chromosomes and is required for cytokinesis. During anaphase, the BCR(KLHL21) E3 ubiquitin ligase complex recruits the CPC complex from chromosomes to the spindle midzone and mediates the ubiquitination of AURKB. Ubiquitination of AURKB by BCR(KLHL21) E3 ubiquitin ligase complex may not lead to its degradation by the proteasome. Deubiquitinated by USP35; inhibiting CDH1-mediated degradation of AURKB.

The protein localises to the nucleus. It is found in the chromosome. The protein resides in the centromere. It localises to the kinetochore. Its subcellular location is the cytoplasm. The protein localises to the cytoskeleton. It is found in the spindle. The protein resides in the midbody. It carries out the reaction L-seryl-[protein] + ATP = O-phospho-L-seryl-[protein] + ADP + H(+). The catalysed reaction is L-threonyl-[protein] + ATP = O-phospho-L-threonyl-[protein] + ADP + H(+). Activity is greatly increased when AURKB is within the CPC complex. In particular, AURKB-phosphorylated INCENP acts as an activator of AURKB. Positive feedback between HASPIN and AURKB contributes to CPC localization. Its function is as follows. Serine/threonine-protein kinase component of the chromosomal passenger complex (CPC), a complex that acts as a key regulator of mitosis. The CPC complex has essential functions at the centromere in ensuring correct chromosome alignment and segregation and is required for chromatin-induced microtubule stabilization and spindle assembly. Involved in the bipolar attachment of spindle microtubules to kinetochores and is a key regulator for the onset of cytokinesis during mitosis. Required for central/midzone spindle assembly and cleavage furrow formation. Key component of the cytokinesis checkpoint, a process required to delay abscission to prevent both premature resolution of intercellular chromosome bridges and accumulation of DNA damage: phosphorylates CHMP4C, leading to retain abscission-competent VPS4 (VPS4A and/or VPS4B) at the midbody ring until abscission checkpoint signaling is terminated at late cytokinesis. AURKB phosphorylates the CPC complex subunits BIRC5/survivin, CDCA8/borealin and INCENP. Phosphorylation of INCENP leads to increased AURKB activity. Other known AURKB substrates involved in centromeric functions and mitosis are CENPA, DES/desmin, GPAF, KIF2C, NSUN2, RACGAP1, SEPTIN1, VIM/vimentin, HASPIN, and histone H3. A positive feedback loop involving HASPIN and AURKB contributes to localization of CPC to centromeres. Phosphorylation of VIM controls vimentin filament segregation in cytokinetic process, whereas histone H3 is phosphorylated at 'Ser-10' and 'Ser-28' during mitosis (H3S10ph and H3S28ph, respectively). AURKB is also required for kinetochore localization of BUB1 and SGO1. Phosphorylation of p53/TP53 negatively regulates its transcriptional activity. Key regulator of active promoters in resting B- and T-lymphocytes: acts by mediating phosphorylation of H3S28ph at active promoters in resting B-cells, inhibiting RNF2/RING1B-mediated ubiquitination of histone H2A and enhancing binding and activity of the USP16 deubiquitinase at transcribed genes. Acts as an inhibitor of CGAS during mitosis: catalyzes phosphorylation of the N-terminus of CGAS during the G2-M transition, blocking CGAS liquid phase separation and activation, and thereby preventing CGAS-induced autoimmunity. Phosphorylates KRT5 during anaphase and telophase. Phosphorylates ATXN10 which promotes phosphorylation of ATXN10 by PLK1 and may play a role in the regulation of cytokinesis and stimulating the proteasomal degradation of ATXN10. This chain is Aurora kinase B (AURKB), found in Sus scrofa (Pig).